A 502-amino-acid chain; its full sequence is MWTADEIAQLCYEHYGIRLPKKGKPEPNHEWTLLAAVVKIQSPADKACDTPDKPVQVTKEVVSMGTGTKCIGQSKMRKNGDILNDSHAEVIARRSFQRYLLHQLQLAATLKEDSIFVPGTQKGVWKLRRDLIFVFFSSHTPCGDASIIPMLEFEDQPCCPVFRNWAHNSSVEASSNLEAPGNERKCEDPDSPVTKKMRLEPGTAAREVTNGAAHHQSFGKQKSGPISPGIHSCDLTVEGLATVTRIAPGSAKVIDVYRTGAKCVPGEAGDSGKPGAAFHQVGLLRVKPGRGDRTRSMSCSDKMARWNVLGCQGALLMHLLEEPIYLSAVVIGKCPYSQEAMQRALIGRCQNVSALPKGFGVQELKILQSDLLFEQSRSAVQAKRADSPGRLVPCGAAISWSAVPEQPLDVTANGFPQGTTKKTIGSLQARSQISKVELFRSFQKLLSRIARDKWPHSLRVQKLDTYQEYKEAASSYQEAWSTLRKQVFGSWIRNPPDYHQFK.

In terms of domain architecture, A to I editase spans 63–501 (SMGTGTKCIG…IRNPPDYHQF (439 aa)). H87 contributes to the Zn(2+) binding site. Catalysis depends on E89, which acts as the Proton donor. Positions 93 and 94 each coordinate 1D-myo-inositol hexakisphosphate. Position 142 (C142) interacts with Zn(2+). A disordered region spans residues 174–194 (SSNLEAPGNERKCEDPDSPVT). S191 carries the phosphoserine modification. Position 299 (C299) interacts with Zn(2+). 1D-myo-inositol hexakisphosphate-binding residues include K302, R305, K435, and K470.

This sequence belongs to the ADAT1 family. 1D-myo-inositol hexakisphosphate is required as a cofactor. In terms of tissue distribution, ubiquitously expressed.

The catalysed reaction is adenosine(37) in tRNA(Ala) + H2O + H(+) = inosine(37) in tRNA(Ala) + NH4(+). Specifically deaminates adenosine-37 to inosine in tRNA-Ala. The chain is tRNA-specific adenosine deaminase 1 (ADAT1) from Homo sapiens (Human).